A 441-amino-acid chain; its full sequence is Polyketide methyltransferase ustM (441 aa).

A methyltransferase (CMeT) domain region spans residues 266-368; the sequence is LEVGAGLGGT…VRKLLRGGGF (103 aa).

It belongs to the methyltransferase superfamily.

It functions in the pathway secondary metabolite biosynthesis. In terms of biological role, polyketide methyltransferase; part of the gene cluster that mediates the biosynthesis of ustilaginoidins, dimeric gamma-naphthopyrones isolated from different fungal species. The first step in the biosynthesis of ustilaginoidins is the production of gamma-naphthopyrone precursor YWA1 by the non-reducing polyketide synthase ustP, via condensation of one acetyl-CoA starter unit with 6 malonyl-CoA units. YWA1 is then probably substrate of the ustZ to yield norrubrofusarin via a dehydration reaction. A key enzyme in the biosynthetic pathway is the laccase ustL, which catalyzes the oxidative dimerization of norrubrofusarin to ustilaginoidin A. It can produce the M- and P-atropisomers in varying amounts, depending on the reaction conditions. For the biosynthesis of 3-methylustilaginoid in derivatives such as chaetochromin A, a methylated derivative of YWA1 is required. The C-methylation is considered to be catalyzed by ustM, the phosphopantetheine attachment site of which indicates that it acts on the growing polyketide chain before release of the product. For the biosynthesis of chaetochromin A, it is assumed that saturation of the D2 double bond takes place before dimerization, and is probably catalyzed by an external reductase because no candidate gene was identified within the cluster. The protein is Polyketide methyltransferase ustM of Ustilaginoidea virens (Rice false smut fungus).